Here is a 128-residue protein sequence, read N- to C-terminus: NADH-quinone oxidoreductase subunit A (128 aa).

The next 3 helical transmembrane spans lie at 12-32, 66-86, and 96-116; these read FAIFIISAIILCVLILTLSFL, FYLIAIFFVLFDIEAFYLYAW, and LGFYEAIIFVSVLLSGLVYLV.

The protein belongs to the complex I subunit 3 family. As to quaternary structure, NDH-1 is composed of 14 different subunits. Subunits NuoA, H, J, K, L, M, N constitute the membrane sector of the complex.

It is found in the cell membrane. It carries out the reaction a quinone + NADH + 5 H(+)(in) = a quinol + NAD(+) + 4 H(+)(out). Its function is as follows. NDH-1 shuttles electrons from NADH, via FMN and iron-sulfur (Fe-S) centers, to quinones in the respiratory chain. The immediate electron acceptor for the enzyme in this species is believed to be ubiquinone. Couples the redox reaction to proton translocation (for every two electrons transferred, four hydrogen ions are translocated across the cytoplasmic membrane), and thus conserves the redox energy in a proton gradient. This Baumannia cicadellinicola subsp. Homalodisca coagulata protein is NADH-quinone oxidoreductase subunit A.